We begin with the raw amino-acid sequence, 173 residues long: Alpha-crystallin A chain (173 aa).

The residue at position 1 (Met-1) is an N-acetylmethionine. Positions 1–63 are required for complex formation with BFSP1 and BFSP2; sequence MDVTIQHPWF…RTVLDSGISE (63 aa). Gln-6 carries the deamidated glutamine; partial modification. Ser-45 bears the Phosphoserine mark. Gln-50 is subject to Deamidated glutamine; partial. The sHSP domain maps to 52–162; sequence LFRTVLDSGI…GHSERAIPVS (111 aa). Lys-70 carries the N6-acetyllysine modification. Gln-90 is subject to Deamidated glutamine; partial. Lys-99 is subject to N6-acetyllysine. His-100 contributes to the Zn(2+) binding site. Asn-101 bears the Deamidated asparagine; partial mark. Zn(2+)-binding residues include Glu-102 and His-107. At Ser-122 the chain carries Phosphoserine. The residue at position 123 (Asn-123) is a Deamidated asparagine; partial. The disordered stretch occupies residues 145–173; the sequence is KVQSGLDAGHSERAIPVSREEKPSSAPSS. Deamidated glutamine; partial is present on Gln-147. Residues 153–167 show a composition bias toward basic and acidic residues; sequence GHSERAIPVSREEKP. Position 154 (His-154) interacts with Zn(2+). A glycan (O-linked (GlcNAc) serine) is linked at Ser-162.

It belongs to the small heat shock protein (HSP20) family. In terms of assembly, heteromer composed of three CRYAA and one CRYAB subunits. Inter-subunit bridging via zinc ions enhances stability, which is crucial as there is no protein turn over in the lens. Can also form homodimers and homotetramers (dimers of dimers) which serve as the building blocks of homooligomers. Within homooligomers, the zinc-binding motif is created from residues of 3 different molecules. His-100 and Glu-102 from one molecule are ligands of the zinc ion, and His-107 and His-154 residues from additional molecules complete the site with tetrahedral coordination geometry. Part of a complex required for lens intermediate filament formation composed of BFSP1, BFSP2 and CRYAA. Acetylation at Lys-70 may increase chaperone activity. In terms of processing, undergoes age-dependent proteolytical cleavage at the C-terminus.

The protein resides in the cytoplasm. It is found in the nucleus. Its function is as follows. Contributes to the transparency and refractive index of the lens. Acts as a chaperone, preventing aggregation of various proteins under a wide range of stress conditions. Required for the correct formation of lens intermediate filaments as part of a complex composed of BFSP1, BFSP2 and CRYAA. The protein is Alpha-crystallin A chain (CRYAA) of Cavia porcellus (Guinea pig).